The chain runs to 178 residues: Stathmin-2-A (178 aa).

An SLD domain is found at 38-178; that stretch reads DDMEIKQLNK…RNKEQLELSG (141 aa). Residues 75 to 178 are a coiled coil; it reads KKKDVSLGEI…RNKEQLELSG (104 aa).

Belongs to the stathmin family. As to expression, nervous tissue.

The protein resides in the cytoplasm. The protein localises to the membrane. It is found in the cell projection. It localises to the lamellipodium. This chain is Stathmin-2-A (stmn2-a), found in Xenopus laevis (African clawed frog).